Consider the following 338-residue polypeptide: Ketol-acid reductoisomerase (NADP(+)) (338 aa).

In terms of domain architecture, KARI N-terminal Rossmann spans 1–181 (MKVFYDKDCD…GGGRAGIIET (181 aa)). Residues 24 to 27 (YGSQ), Arg47, and Ser52 each bind NADP(+). Residue His107 is part of the active site. Gly133 contributes to the NADP(+) binding site. Residues 182–327 (NFREETETDL…GKLRAMMPWI (146 aa)) form the KARI C-terminal knotted domain. Residues Asp190, Glu194, Glu226, and Glu230 each coordinate Mg(2+). Ser251 lines the substrate pocket.

It belongs to the ketol-acid reductoisomerase family. Mg(2+) is required as a cofactor.

It carries out the reaction (2R)-2,3-dihydroxy-3-methylbutanoate + NADP(+) = (2S)-2-acetolactate + NADPH + H(+). The catalysed reaction is (2R,3R)-2,3-dihydroxy-3-methylpentanoate + NADP(+) = (S)-2-ethyl-2-hydroxy-3-oxobutanoate + NADPH + H(+). It functions in the pathway amino-acid biosynthesis; L-isoleucine biosynthesis; L-isoleucine from 2-oxobutanoate: step 2/4. It participates in amino-acid biosynthesis; L-valine biosynthesis; L-valine from pyruvate: step 2/4. In terms of biological role, involved in the biosynthesis of branched-chain amino acids (BCAA). Catalyzes an alkyl-migration followed by a ketol-acid reduction of (S)-2-acetolactate (S2AL) to yield (R)-2,3-dihydroxy-isovalerate. In the isomerase reaction, S2AL is rearranged via a Mg-dependent methyl migration to produce 3-hydroxy-3-methyl-2-ketobutyrate (HMKB). In the reductase reaction, this 2-ketoacid undergoes a metal-dependent reduction by NADPH to yield (R)-2,3-dihydroxy-isovalerate. The protein is Ketol-acid reductoisomerase (NADP(+)) of Bordetella bronchiseptica (strain ATCC BAA-588 / NCTC 13252 / RB50) (Alcaligenes bronchisepticus).